The primary structure comprises 250 residues: ADPR responsive transcriptional repressor NtrR (250 aa).

Residues 26 to 157 form the Nudix hydrolase domain; it reads LMTVDMAIFS…DHHDLLQQAF (132 aa). The Nudix box motif lies at 62–85; that stretch reads GFVDLEQDQNLMACAHRKLLEKTG. Positions 164-237 are winged helix-like DNA-binding region; that stretch reads TRYTALPISL…RFALQDYDFN (74 aa).

DNA binding is efficiently suppressed in the presence of ADP-ribose (ADPR) or phospho-ADPR. Accumulation of ADPR resulting from NAD degradation may be interpreted by the cell as a signal to activate recycling of nicotinamide. In terms of biological role, involved in the transcriptional regulation of the nondeamidating salvage pathway for production of NAD from nicotinamide. Represses expression of the prs-nadV-nrtR operon by binding to the DNA region located upstream of the operon, thus blocking the nondeamidating pathway. This Acinetobacter baylyi (strain ATCC 33305 / BD413 / ADP1) protein is ADPR responsive transcriptional repressor NtrR.